Reading from the N-terminus, the 479-residue chain is T-box transcription factor TBX1 (479 aa).

2 stretches are compositionally biased toward low complexity: residues 15–31 (ASSL…ADPF) and 59–86 (YPFA…AAAV). The disordered stretch occupies residues 15 to 86 (ASSLSGLGSP…GPGASRAAAV (72 aa)). The T-box DNA-binding region spans 108-286 (LWDEFNQLGT…SNPFAKGFRD (179 aa)). A disordered region spans residues 311–398 (RNPVASPTQP…APGASEPLHH (88 aa)). The span at 313–322 (PVASPTQPNG) shows a compositional bias: polar residues. A compositionally biased stretch (basic and acidic residues) spans 323-338 (SDKDAAEARREFDRDS). Residues 415–426 (KSRPAPYPLPGL) carry the Nuclear localization signal motif.

In terms of assembly, binds DNA as a dimer. Interacts with DSCR6. Interacts with NKX2-5. In terms of tissue distribution, expressed in skeletal muscle, lung and testis. Highly expressed in hair follicle stem cell, but not in terminally differentiating cells.

The protein localises to the nucleus. Functionally, transcription factor that plays a key role in cardiovascular development by promoting pharyngeal arch segmentation during embryonic development. Also involved in craniofacial muscle development. Together with NKX2-5, acts as a regulator of asymmetric cardiac morphogenesis by promoting expression of PITX2. Acts upstream of TBX1 for the formation of the thymus and parathyroid glands from the third pharyngeal pouch. Required for hair follicle stem cell self-renewal. Binds to the palindromic T site 5'-TTCACACCTAGGTGTGAA-3' DNA sequence. This is T-box transcription factor TBX1 from Mus musculus (Mouse).